A 176-amino-acid polypeptide reads, in one-letter code: Ribose 1,5-bisphosphate phosphokinase PhnN (176 aa).

10–17 (GPSGAGKD) provides a ligand contact to ATP.

The protein belongs to the ribose 1,5-bisphosphokinase family.

The catalysed reaction is alpha-D-ribose 1,5-bisphosphate + ATP = 5-phospho-alpha-D-ribose 1-diphosphate + ADP. Its pathway is metabolic intermediate biosynthesis; 5-phospho-alpha-D-ribose 1-diphosphate biosynthesis; 5-phospho-alpha-D-ribose 1-diphosphate from D-ribose 5-phosphate (route II): step 3/3. Its function is as follows. Catalyzes the phosphorylation of ribose 1,5-bisphosphate to 5-phospho-D-ribosyl alpha-1-diphosphate (PRPP). The chain is Ribose 1,5-bisphosphate phosphokinase PhnN from Methylobacterium radiotolerans (strain ATCC 27329 / DSM 1819 / JCM 2831 / NBRC 15690 / NCIMB 10815 / 0-1).